The chain runs to 521 residues: ATP synthase subunit beta (521 aa).

Composition is skewed to low complexity over residues 1–21 (MAKAATPKTTAAAEAKPAAKA) and 28–42 (PKTTAAAKPAATKSG). The tract at residues 1-42 (MAKAATPKTTAAAEAKPAAKAPAKKAAPKTTAAAKPAATKSG) is disordered. Residue 199–206 (GGAGVGKT) participates in ATP binding.

Belongs to the ATPase alpha/beta chains family. F-type ATPases have 2 components, CF(1) - the catalytic core - and CF(0) - the membrane proton channel. CF(1) has five subunits: alpha(3), beta(3), gamma(1), delta(1), epsilon(1). CF(0) has three main subunits: a(1), b(2) and c(9-12). The alpha and beta chains form an alternating ring which encloses part of the gamma chain. CF(1) is attached to CF(0) by a central stalk formed by the gamma and epsilon chains, while a peripheral stalk is formed by the delta and b chains.

It is found in the cell inner membrane. It carries out the reaction ATP + H2O + 4 H(+)(in) = ADP + phosphate + 5 H(+)(out). Its function is as follows. Produces ATP from ADP in the presence of a proton gradient across the membrane. The catalytic sites are hosted primarily by the beta subunits. The sequence is that of ATP synthase subunit beta from Brucella canis (strain ATCC 23365 / NCTC 10854 / RM-666).